A 176-amino-acid chain; its full sequence is Pituitary adenylate cyclase-activating polypeptide (176 aa).

Positions 1–24 are cleaved as a signal peptide; sequence MTMCSGARLALLVYGIIMHSSVYC. A propeptide spanning residues 25-80 is cleaved from the precursor; sequence SPAAAGLRFPGIRPEDEAYDEDGNPLQDFYDSDPPGVGGPASTLRDAYALYYPAEE. An important for receptor binding region spans residues 150–158; sequence VKKYLAAVL. Leucine 158 is modified (leucine amide). Position 169 is a lysine amide (lysine 169). Residues 173–176 constitute a propeptide that is removed on maturation; the sequence is IAYL.

It belongs to the glucagon family.

Its subcellular location is the secreted. PACAP is a neuropeptide involved in diverse array of physiological processes through activating the PACAP subfamily of class B1 G protein-coupled receptors: VIP receptor 1 (VIPR1), VIP receptor 2 (VIPR2), and PACAP type I receptor (ADCYAP1R1). Exerts neuroprotective and general cytoprotective effects due to anti-apoptotic, anti-inflammatory, and antioxidant actions. Promotes neuron projection development through the RAPGEF2/Rap1/B-Raf/ERK pathway. In chromaffin cells, induces long-lasting increase of intracellular calcium concentrations and neuroendocrine secretion. Involved in the control of glucose homeostasis, induces insulin secretion by pancreatic beta cells. PACAP exists in two bioactive forms from proteolysis of the same precursor protein, PACAP27 and PACAP38, which differ by eleven amino acid residues in the C-terminus. This Sus scrofa (Pig) protein is Pituitary adenylate cyclase-activating polypeptide (ADCYAP1).